The chain runs to 419 residues: L-rhamnose isomerase (419 aa).

Residues histidine 262, aspartate 294, and aspartate 296 each contribute to the Mn(2+) site.

It belongs to the rhamnose isomerase family. Homotetramer. The cofactor is Mn(2+).

Its subcellular location is the cytoplasm. The enzyme catalyses L-rhamnopyranose = L-rhamnulose. The protein operates within carbohydrate degradation; L-rhamnose degradation; glycerone phosphate from L-rhamnose: step 1/3. Its function is as follows. Catalyzes the interconversion of L-rhamnose and L-rhamnulose. In Shigella flexneri serotype 5b (strain 8401), this protein is L-rhamnose isomerase.